The following is a 132-amino-acid chain: Ribosome-binding factor A (132 aa).

It belongs to the RbfA family. In terms of assembly, monomer. Binds 30S ribosomal subunits, but not 50S ribosomal subunits or 70S ribosomes.

Its subcellular location is the cytoplasm. Its function is as follows. One of several proteins that assist in the late maturation steps of the functional core of the 30S ribosomal subunit. Associates with free 30S ribosomal subunits (but not with 30S subunits that are part of 70S ribosomes or polysomes). Required for efficient processing of 16S rRNA. May interact with the 5'-terminal helix region of 16S rRNA. In Pseudomonas putida (strain W619), this protein is Ribosome-binding factor A.